Reading from the N-terminus, the 471-residue chain is Putative multidrug resistance protein MdtD (471 aa).

13 helical membrane-spanning segments follow: residues 12–32 (LWIV…VNTA), 49–69 (MVIV…GWMA), 72–92 (IGVR…SLFC), 101–123 (LVMS…RLTV), 138–158 (FVTL…GILV), 165–185 (WIFL…LWLM), 195–215 (FDIF…LALD), 220–240 (LGIS…SILW), 265–285 (IGLF…FMTP), 286–306 (VFLQ…MIPM), 342–362 (LVFM…VLFF), 393–413 (LLSM…GLLL), and 431–451 (VFLY…LIFA).

This sequence belongs to the major facilitator superfamily. TCR/Tet family.

The protein localises to the cell inner membrane. This is Putative multidrug resistance protein MdtD from Enterobacter sp. (strain 638).